A 165-amino-acid polypeptide reads, in one-letter code: Short form salivary protein D7R1 (165 aa).

The signal sequence occupies residues Met-1–Ala-21. Cystine bridges form between Cys-27–Cys-59, Cys-40–Cys-164, and Cys-98–Cys-117. The serotonin site is built by Glu-28, His-56, Tyr-115, Asp-132, and Glu-135. Positions 115, 132, and 135 each coordinate histamine.

The protein belongs to the PBP/GOBP family. Female salivary gland. Not detected in female carcass without salivary glands. Not detected in male tissues.

The protein resides in the secreted. Its function is as follows. Modulates blood feeding of female mosquitoes on vertebrate species by binding and sequestering different mediators involved in the host response. Binds serotonin and histamine. Increases blood clotting time. The sequence is that of Short form salivary protein D7R1 from Anopheles gambiae (African malaria mosquito).